Reading from the N-terminus, the 193-residue chain is CASP-like protein 1D1 (193 aa).

Residues 1–24 (MGYETKSTLDTERSTAPGTGTTTK) are disordered. Over 1–30 (MGYETKSTLDTERSTAPGTGTTTKSCSMTQ) the chain is Cytoplasmic. The span at 14–24 (STAPGTGTTTK) shows a compositional bias: polar residues. A helical membrane pass occupies residues 31–51 (VVLRFVLFAATLTSIVVMVTS). Over 52–76 (KQTKNIFLPGTPIRIPAAEFTNSPA) the chain is Extracellular. The chain crosses the membrane as a helical span at residues 77–97 (LIYFVVALSVACFYSIVSTFV). Residues 98-108 (TVSAFKKHSCS) are Cytoplasmic-facing. The helical transmembrane segment at 109–129 (AVLLLNLAIMDAVMVGIVASA) threads the bilayer. The Extracellular portion of the chain corresponds to 130–162 (TGAGGGVAYLGLKGNKEVRWGKICHIYDKFCRH). The helical transmembrane segment at 163 to 183 (VGGAIAVSLFASVVLLLLSII) threads the bilayer. Topologically, residues 184–193 (SVLSLYKKIR) are cytoplasmic.

This sequence belongs to the Casparian strip membrane proteins (CASP) family. In terms of assembly, homodimer and heterodimers.

The protein resides in the cell membrane. The sequence is that of CASP-like protein 1D1 from Arabidopsis thaliana (Mouse-ear cress).